Reading from the N-terminus, the 946-residue chain is Inhibin beta chain (946 aa).

2 disordered regions span residues Val-115–Ser-142 and Lys-174–Arg-194. Low complexity predominate over residues Val-128 to Ser-142. Asn-208, Asn-217, Asn-271, and Asn-389 each carry an N-linked (GlcNAc...) asparagine glycan. Residues Ser-436–Tyr-462 are disordered. The segment covering Gly-447–His-459 has biased composition (basic and acidic residues). N-linked (GlcNAc...) asparagine glycans are attached at residues Asn-471, Asn-484, Asn-542, Asn-561, Asn-566, Asn-732, and Asn-804. Cystine bridges form between Cys-837-Cys-846, Cys-845-Cys-912, Cys-874-Cys-943, and Cys-878-Cys-945.

This sequence belongs to the TGF-beta family. In terms of assembly, homodimer or heterodimer; disulfide-linked. In terms of processing, cleaved in vitro by metalloproteases tok and tld to produce a 30 kDa product. In terms of tissue distribution, widely expressed in larval brains.

Its subcellular location is the secreted. Controls several aspects of neuronal morphogenesis; essential for optic lobe development, EcR-B1 expression in larval brains, mushroom body remodeling, dorsal neuron morphogenesis and motoneuron axon guidance. Ligands Actbeta and daw act redundantly through the Activin receptor Babo and its transcriptional mediator Smad2 (Smox), to regulate neuroblast numbers and proliferation rates in the developing larval brain. The sequence is that of Inhibin beta chain (Actbeta) from Drosophila melanogaster (Fruit fly).